The sequence spans 390 residues: Cell adhesion molecule 4 (390 aa).

The signal sequence occupies residues 1 to 27; sequence MAPALTALNRCFVLGILLLVTAGTAFS. In terms of domain architecture, Ig-like V-type spans 28 to 122; it reads QEVQAENVTV…DTHHQIATLT (95 aa). Residues 28-326 lie on the Extracellular side of the membrane; sequence QEVQAENVTV…IEAQTQVPYA (299 aa). N-linked (GlcNAc...) asparagine glycosylation is found at Asn-34 and Asn-70. Cystine bridges form between Cys-47–Cys-107, Cys-148–Cys-202, and Cys-247–Cys-293. 2 consecutive Ig-like C2-type domains span residues 127 to 219 and 226 to 309; these read PDNP…TQYE and PTAS…YVLV. 2 N-linked (GlcNAc...) asparagine glycosylation sites follow: Asn-264 and Asn-288. The chain crosses the membrane as a helical span at residues 327–347; the sequence is VIGGILALLVFLVICILIVMV. Over 348-390 the chain is Cytoplasmic; that stretch reads WCSVRQKGSYLTHEASGLDEHGEAREAFLNGGENHKRKEEFFI.

Belongs to the nectin family.

The protein localises to the membrane. Its function is as follows. Involved in the cell-cell adhesion. This chain is Cell adhesion molecule 4 (cadm4), found in Xenopus laevis (African clawed frog).